The sequence spans 417 residues: Gamma-glutamyl phosphate reductase (417 aa).

It belongs to the gamma-glutamyl phosphate reductase family.

The protein localises to the cytoplasm. It carries out the reaction L-glutamate 5-semialdehyde + phosphate + NADP(+) = L-glutamyl 5-phosphate + NADPH + H(+). Its pathway is amino-acid biosynthesis; L-proline biosynthesis; L-glutamate 5-semialdehyde from L-glutamate: step 2/2. Functionally, catalyzes the NADPH-dependent reduction of L-glutamate 5-phosphate into L-glutamate 5-semialdehyde and phosphate. The product spontaneously undergoes cyclization to form 1-pyrroline-5-carboxylate. The protein is Gamma-glutamyl phosphate reductase of Legionella pneumophila (strain Corby).